The following is a 326-amino-acid chain: DNA-directed RNA polymerase subunit alpha (326 aa).

The tract at residues 1–232 (MQSATEFLKP…SQLSVFADLE (232 aa)) is alpha N-terminal domain (alpha-NTD). The segment at 246–326 (VDPLLLRPVD…NWPPAGLERP (81 aa)) is alpha C-terminal domain (alpha-CTD).

It belongs to the RNA polymerase alpha chain family. In terms of assembly, homodimer. The RNAP catalytic core consists of 2 alpha, 1 beta, 1 beta' and 1 omega subunit. When a sigma factor is associated with the core the holoenzyme is formed, which can initiate transcription.

The catalysed reaction is RNA(n) + a ribonucleoside 5'-triphosphate = RNA(n+1) + diphosphate. DNA-dependent RNA polymerase catalyzes the transcription of DNA into RNA using the four ribonucleoside triphosphates as substrates. The sequence is that of DNA-directed RNA polymerase subunit alpha from Thiobacillus denitrificans (strain ATCC 25259 / T1).